Consider the following 304-residue polypeptide: Small ribosomal subunit biogenesis GTPase RsgA (304 aa).

The CP-type G domain occupies 78 to 237 (VSFLTRPPVA…VADTPGFNRP (160 aa)). Residues 127-130 (TKTD) and 179-187 (GPSGVGKSS) contribute to the GTP site. 4 residues coordinate Zn(2+): C262, C267, H269, and C275.

This sequence belongs to the TRAFAC class YlqF/YawG GTPase family. RsgA subfamily. Monomer. Associates with 30S ribosomal subunit, binds 16S rRNA. The cofactor is Zn(2+).

The protein localises to the cytoplasm. One of several proteins that assist in the late maturation steps of the functional core of the 30S ribosomal subunit. Helps release RbfA from mature subunits. May play a role in the assembly of ribosomal proteins into the subunit. Circularly permuted GTPase that catalyzes slow GTP hydrolysis, GTPase activity is stimulated by the 30S ribosomal subunit. The polypeptide is Small ribosomal subunit biogenesis GTPase RsgA (Synechococcus sp. (strain CC9311)).